The primary structure comprises 264 residues: Phosphonoacetaldehyde hydrolase (264 aa).

Asp9 (nucleophile) is an active-site residue. Positions 9 and 11 each coordinate Mg(2+). Lys50 serves as the catalytic Schiff-base intermediate with substrate. Mg(2+) is bound at residue Asp183.

This sequence belongs to the HAD-like hydrolase superfamily. PhnX family. In terms of assembly, homodimer. Requires Mg(2+) as cofactor.

It carries out the reaction phosphonoacetaldehyde + H2O = acetaldehyde + phosphate + H(+). Involved in phosphonate degradation. This chain is Phosphonoacetaldehyde hydrolase, found in Bacillus cereus (strain G9842).